The following is a 339-amino-acid chain: Serine/arginine-rich splicing factor 6 (339 aa).

Residues 2 to 72 enclose the RRM 1 domain; it reads PRVYIGRLSY…ERVIVEHARG (71 aa). Residues Ser-45, Ser-81, and Ser-84 each carry the phosphoserine modification. The segment at 75–103 is disordered; it reads RDRDGYSYGSRSGGGGYSSRRTSGRDKYG. The region spanning 110-183 is the RRM 2 domain; sequence YRLIVENLSS…RNIRLIEDKP (74 aa). The residue at position 165 (Lys-165) is an N6-acetyllysine. Positions 176 to 339 are disordered; sequence IRLIEDKPRT…RSRSRSSSRD (164 aa). Lys-182 participates in a covalent cross-link: Glycyl lysine isopeptide (Lys-Gly) (interchain with G-Cter in SUMO2). Positions 185-250 are enriched in basic residues; that stretch reads TSHRRSYSGS…RKSRSKSKSK (66 aa). Positions 280-291 are enriched in basic and acidic residues; that stretch reads SPKENGKGDIKS. 2 positions are modified to phosphoserine: Ser-297 and Ser-299. Phosphoserine; by DYRK1A is present on Ser-303. A phosphoserine mark is found at Ser-314 and Ser-316. Basic residues predominate over residues 321-339; that stretch reads RASRSRSRSRSRSRSSSRD.

This sequence belongs to the splicing factor SR family. In terms of assembly, binds SREK1/SFRS12. Interacts with DYRK1A. Interacts with RBMY; the interaction inhibits SRSF6 pre-mRNA splicing. Extensively phosphorylated on serine residues in the RS domain. Phosphorylated by DYRK1A, probably in the RS domain. Phosphorylation by DYRK1A modulates alternative splice site selection and inhibits the expression of MAPT/Tau exon 10.

The protein resides in the nucleus. The protein localises to the nucleus speckle. Its function is as follows. Plays a role in constitutive splicing and modulates the selection of alternative splice sites. Plays a role in the alternative splicing of MAPT/Tau exon 10. Binds to alternative exons of TNC pre-mRNA and promotes the expression of alternatively spliced TNC. Plays a role in wound healing and in the regulation of keratinocyte differentiation and proliferation via its role in alternative splicing. The chain is Serine/arginine-rich splicing factor 6 (Srsf6) from Mus musculus (Mouse).